The chain runs to 239 residues: Ribonuclease PH (239 aa).

Phosphate contacts are provided by residues arginine 86 and 124–126; that span reads GTR.

It belongs to the RNase PH family. In terms of assembly, homohexameric ring arranged as a trimer of dimers.

It carries out the reaction tRNA(n+1) + phosphate = tRNA(n) + a ribonucleoside 5'-diphosphate. Phosphorolytic 3'-5' exoribonuclease that plays an important role in tRNA 3'-end maturation. Removes nucleotide residues following the 3'-CCA terminus of tRNAs; can also add nucleotides to the ends of RNA molecules by using nucleoside diphosphates as substrates, but this may not be physiologically important. Probably plays a role in initiation of 16S rRNA degradation (leading to ribosome degradation) during starvation. This is Ribonuclease PH from Rickettsia bellii (strain OSU 85-389).